The primary structure comprises 320 residues: Olfactory receptor 51E2 (320 aa).

At 1–27 (MSSCNFTHATFLLIGIPGLEEAHFWFG) the chain is on the extracellular side. Residue N5 is glycosylated (N-linked (GlcNAc...) asparagine). A helical transmembrane segment spans residues 28–48 (FPLLSMYAVALFGNCIVVFIV). At 49–53 (RTERS) the chain is on the cytoplasmic side. The helical transmembrane segment at 54–74 (LHAPMYLFLCMLAAIDLALST) threads the bilayer. At 75–98 (STMPKILALFWFDSREITFDACLA) the chain is on the extracellular side. A disulfide bridge connects residues C96 and C178. The chain crosses the membrane as a helical span at residues 99-119 (QMFFIHTLSAIESTILLAMAF). Residues 120 to 141 (DRYVAICHPLRHAAVLNNTVTV) lie on the Cytoplasmic side of the membrane. The chain crosses the membrane as a helical span at residues 142 to 162 (QIGMVALVRGSLFFFPLPLLI). The Extracellular portion of the chain corresponds to 163-200 (KRLAFCHSNVLSHSYCVHQDVMKLAYTDTLPNVVYGLT). Residues 201–221 (AILLVMGVDVMFISLSYFLII) form a helical membrane-spanning segment. Residues 222–239 (RTVLQLPSKSERAKAFGT) are Cytoplasmic-facing. Residues 240–260 (CVSHISVVLAFYVPLIGLSVV) traverse the membrane as a helical segment. At 261–269 (HRFGNSLDP) the chain is on the extracellular side. Residues 270-290 (IVHVLMGDVYLLLPPVINPII) form a helical membrane-spanning segment. Residues 291 to 320 (YGAKTKQIRTRVLAMFKISCDKDIEAGGNT) lie on the Cytoplasmic side of the membrane.

Belongs to the G-protein coupled receptor 1 family. In brain, expressed in medulla oblongata by cells close to the fourth ventricle, in the area postrema, the nucleus tractus solitarius. Expressed in olfactory epithelium and vomeronasal organ. Expressed in kidney by large renal vessels, renal afferent arterioles, and extrarenal vascular beds. In small resistance vessels the expression is restricted to cells of the juxtaglomerular afferent arteriole, which mediate renin secretion. Also detected in small blood vessels in a variety of tissues including heart, diaphragm, skeletal muscle, and skin. In the heart, esophagus, and stomach it is detected in axons of autonomic neurons and neurons of the enteric plexus. Also detected in colon and liver. Expressed in the glomus cells of the carotid body.

The protein resides in the cell membrane. It is found in the early endosome membrane. Functionally, olfactory receptor. The activity of this receptor is probably mediated by G-proteins which induce elevation of intracellular Ca(2+), cAMP and activation of phosphorylation of the protein kinases PKA and MAPK3/MAPK1. Activation of OR51E2 may affect melanocyte proliferation, differentiation, and melanogenesis and may increase proliferation and migration of primary retinal pigment epithelial (RPE) cells. Activated by the short chain fatty acids (SCFA), acetate and propionate. In response to SCFA, may positively regulate renin secretion and increase blood pressure. May also be activated by steroid hormones and regulate cell proliferation. Activated by L-lactate in glomus cells. The protein is Olfactory receptor 51E2 (Or51e2) of Mus musculus (Mouse).